Here is a 297-residue protein sequence, read N- to C-terminus: Acetyl-coenzyme A carboxylase carboxyl transferase subunit beta (297 aa).

In terms of domain architecture, CoA carboxyltransferase N-terminal spans Leu27–Val296. Zn(2+)-binding residues include Cys31, Cys34, Cys50, and Cys53. The C4-type zinc-finger motif lies at Cys31 to Cys53.

This sequence belongs to the AccD/PCCB family. As to quaternary structure, acetyl-CoA carboxylase is a heterohexamer composed of biotin carboxyl carrier protein (AccB), biotin carboxylase (AccC) and two subunits each of ACCase subunit alpha (AccA) and ACCase subunit beta (AccD). Zn(2+) is required as a cofactor.

Its subcellular location is the cytoplasm. The enzyme catalyses N(6)-carboxybiotinyl-L-lysyl-[protein] + acetyl-CoA = N(6)-biotinyl-L-lysyl-[protein] + malonyl-CoA. It participates in lipid metabolism; malonyl-CoA biosynthesis; malonyl-CoA from acetyl-CoA: step 1/1. In terms of biological role, component of the acetyl coenzyme A carboxylase (ACC) complex. Biotin carboxylase (BC) catalyzes the carboxylation of biotin on its carrier protein (BCCP) and then the CO(2) group is transferred by the transcarboxylase to acetyl-CoA to form malonyl-CoA. This chain is Acetyl-coenzyme A carboxylase carboxyl transferase subunit beta, found in Pseudomonas entomophila (strain L48).